Consider the following 901-residue polypeptide: HTH-type transcriptional regulator MalT (901 aa).

S39–T46 is a binding site for ATP. Positions E829–L894 constitute an HTH luxR-type domain. Positions N853–R872 form a DNA-binding region, H-T-H motif.

This sequence belongs to the MalT family. Monomer in solution. Oligomerizes to an active state in the presence of the positive effectors ATP and maltotriose.

With respect to regulation, activated by ATP and maltotriose, which are both required for DNA binding. Its function is as follows. Positively regulates the transcription of the maltose regulon whose gene products are responsible for uptake and catabolism of malto-oligosaccharides. Specifically binds to the promoter region of its target genes, recognizing a short DNA motif called the MalT box. The polypeptide is HTH-type transcriptional regulator MalT (Shigella flexneri serotype 5b (strain 8401)).